We begin with the raw amino-acid sequence, 134 residues long: MIIGIGTDLCNIDRITTILGKKESGRFIKRLFSCEEIEASSAFSMTKAAFFAKRFAAKEAFVKALGTGFRHSISFQDISISNDSLGAPKVNISGKAALLLEEKKPPRHTLSIHLSLSDDHPWALAFVVIEACPE.

Mg(2+) is bound by residues aspartate 8 and glutamate 59.

This sequence belongs to the P-Pant transferase superfamily. AcpS family. It depends on Mg(2+) as a cofactor.

It is found in the cytoplasm. It catalyses the reaction apo-[ACP] + CoA = holo-[ACP] + adenosine 3',5'-bisphosphate + H(+). Functionally, transfers the 4'-phosphopantetheine moiety from coenzyme A to a Ser of acyl-carrier-protein. This is Holo-[acyl-carrier-protein] synthase from Zymomonas mobilis subsp. mobilis (strain ATCC 31821 / ZM4 / CP4).